Reading from the N-terminus, the 209-residue chain is PRA1 family protein A1 (209 aa).

A run of 4 helical transmembrane segments spans residues 51-73 (LYYY…VLTR), 77-99 (IFAA…GSFS), 144-164 (VFVL…SGLL), and 166-186 (VSVA…LRTP).

The protein belongs to the PRA1 family.

The protein localises to the endoplasmic reticulum membrane. In terms of biological role, may be involved in both secretory and endocytic intracellular trafficking in the endosomal/prevacuolar compartments. This Arabidopsis thaliana (Mouse-ear cress) protein is PRA1 family protein A1 (PRA1A1).